We begin with the raw amino-acid sequence, 528 residues long: Calcium-dependent protein kinase 17 (528 aa).

Residues 1 to 65 form a disordered region; sequence MGNCCSHGRD…GPIGPVLGRP (65 aa). Glycine 2 carries the N-myristoyl glycine lipid modification. A compositionally biased stretch (low complexity) spans 20 to 45; sequence NGASASNAANSTGPTAEASVPQSKHA. A Protein kinase domain is found at 73-331; that stretch reads YSLGKELGRG…AAQVLNHPWI (259 aa). Residues 79–87 and lysine 102 each bind ATP; that span reads LGRGQFGVT. Aspartate 197 functions as the Proton acceptor in the catalytic mechanism. Position 237 is a phosphoserine (serine 237). Residues 337–367 form an autoinhibitory domain region; it reads APDVPLDNAVMSRLKQFKAMNNFKKVALRVI. EF-hand domains are found at residues 374-409, 410-445, 446-481, and 485-516; these read EEIM…QGTR, LSEY…INRL, DREE…FGMN, and DIKE…GNPD. Residues aspartate 387, aspartate 389, serine 391, threonine 393, glutamate 398, aspartate 423, aspartate 425, asparagine 427, threonine 429, glutamate 434, aspartate 459, aspartate 461, serine 463, tyrosine 465, glutamate 470, aspartate 494, aspartate 496, aspartate 498, arginine 500, and glutamate 505 each coordinate Ca(2+).

Belongs to the protein kinase superfamily. Ser/Thr protein kinase family. CDPK subfamily.

The protein localises to the membrane. It carries out the reaction L-seryl-[protein] + ATP = O-phospho-L-seryl-[protein] + ADP + H(+). It catalyses the reaction L-threonyl-[protein] + ATP = O-phospho-L-threonyl-[protein] + ADP + H(+). Activated by calcium. Autophosphorylation may play an important role in the regulation of the kinase activity. In terms of biological role, may play a role in signal transduction pathways that involve calcium as a second messenger. The chain is Calcium-dependent protein kinase 17 (CPK17) from Arabidopsis thaliana (Mouse-ear cress).